A 125-amino-acid chain; its full sequence is Small ribosomal subunit protein bS6 (125 aa).

The disordered stretch occupies residues 94-125; it reads KAETGASSMMKTVEREEARKASQAEFAASNER. Residues 105–115 show a composition bias toward basic and acidic residues; that stretch reads TVEREEARKAS.

It belongs to the bacterial ribosomal protein bS6 family.

Binds together with bS18 to 16S ribosomal RNA. The polypeptide is Small ribosomal subunit protein bS6 (Acidovorax ebreus (strain TPSY) (Diaphorobacter sp. (strain TPSY))).